The sequence spans 83 residues: Exodeoxyribonuclease 7 small subunit (83 aa).

Belongs to the XseB family. As to quaternary structure, heterooligomer composed of large and small subunits.

It localises to the cytoplasm. It catalyses the reaction Exonucleolytic cleavage in either 5'- to 3'- or 3'- to 5'-direction to yield nucleoside 5'-phosphates.. Bidirectionally degrades single-stranded DNA into large acid-insoluble oligonucleotides, which are then degraded further into small acid-soluble oligonucleotides. This Moorella thermoacetica (strain ATCC 39073 / JCM 9320) protein is Exodeoxyribonuclease 7 small subunit.